The chain runs to 122 residues: NADH-quinone oxidoreductase subunit A (122 aa).

3 helical membrane-spanning segments follow: residues 10 to 30 (LIVF…LTIG), 67 to 87 (FALL…WAVV), and 91 to 111 (LGLF…IGLI).

This sequence belongs to the complex I subunit 3 family. NDH-1 is composed of 14 different subunits. Subunits NuoA, H, J, K, L, M, N constitute the membrane sector of the complex.

The protein resides in the cell membrane. It catalyses the reaction a quinone + NADH + 5 H(+)(in) = a quinol + NAD(+) + 4 H(+)(out). Its function is as follows. NDH-1 shuttles electrons from NADH, via FMN and iron-sulfur (Fe-S) centers, to quinones in the respiratory chain. The immediate electron acceptor for the enzyme in this species is believed to be a menaquinone. Couples the redox reaction to proton translocation (for every two electrons transferred, four hydrogen ions are translocated across the cytoplasmic membrane), and thus conserves the redox energy in a proton gradient. This is NADH-quinone oxidoreductase subunit A from Geobacillus thermodenitrificans (strain NG80-2).